The primary structure comprises 453 residues: Anthocyanidin 3-O-glucosyltransferase (453 aa).

H17 functions as the Proton acceptor in the catalytic mechanism. Position 17 (H17) interacts with an anthocyanidin. D117 (charge relay) is an active-site residue. T139 serves as a coordination point for UDP-alpha-D-glucose. An an anthocyanidin-binding site is contributed by H148. UDP-alpha-D-glucose contacts are provided by A331, Q333, H348, W351, N352, S353, and E356. Residue G371 coordinates an anthocyanidin. UDP-alpha-D-glucose contacts are provided by D372 and Q373.

It belongs to the UDP-glycosyltransferase family.

The catalysed reaction is an anthocyanidin + UDP-alpha-D-glucose + H(+) = an anthocyanidin 3-O-beta-D-glucoside + UDP. It carries out the reaction delphinidin + UDP-alpha-D-glucose = delphinidin 3-O-beta-D-glucoside + UDP. The enzyme catalyses pelargonidin + UDP-alpha-D-glucose = pelargonidin 3-O-beta-D-glucoside + UDP. It catalyses the reaction cyanidin + UDP-alpha-D-glucose = cyanidin 3-O-beta-D-glucoside + UDP + H(+). The protein operates within pigment biosynthesis; anthocyanin biosynthesis. Functionally, in the presence of other necessary color factors, this glycosylation reaction allows the accumulation of anthocyanin pigments. Anthocyanidins are the preferred substrates, while flavonols are only a minor substrate in vitro. This Gentiana triflora (Clustered gentian) protein is Anthocyanidin 3-O-glucosyltransferase.